A 622-amino-acid polypeptide reads, in one-letter code: Deoxynucleoside triphosphate triphosphohydrolase SAMHD1 (622 aa).

One can recognise an SAM domain in the interval Trp26 to Ile89. GTP is bound by residues Lys95 and Val96. Asn98 contributes to the dGTP binding site. 3 residues coordinate GTP: Asp116, Gln121, and Arg124. Residues Gln128, Leu129, Val135, and Arg143 each coordinate dGTP. A dATP-binding site is contributed by Gln128. Position 128 (Gln128) interacts with dCTP. Gln128 is a binding site for dTTP. Arg143 contributes to the dATP binding site. DCTP is bound at residue Arg143. Residue Arg143 participates in dTTP binding. The region spanning Arg143–Phe296 is the HD domain. Residues His146, His185, and Asp186 each contribute to the Mn(2+) site. DATP-binding residues include His189 and His194. Positions 189 and 194 each coordinate dCTP. Residues His189 and His194 each coordinate dTTP. His212 is a catalytic residue. Asp291 serves as a coordination point for Mn(2+). Residues Lys292, Tyr295, Asp299, Arg313, Arg332, Lys334, Asn338, Arg346, Tyr354, Gln355, His356, and Lys357 each contribute to the dGTP site. DATP contacts are provided by Lys292, Tyr295, and Asp299. DCTP-binding residues include Lys292, Tyr295, and Asp299. The dTTP site is built by Lys292, Tyr295, and Asp299. Arg346 provides a ligand contact to dATP. Position 346 (Arg346) interacts with dCTP. Gln355 contributes to the dATP binding site. Residue Gln355 coordinates dCTP. Gln355 contributes to the dTTP binding site. Arg431, Lys435, and Lys502 together coordinate GTP. Lys502 is a dGTP binding site. Positions Thr571 to Leu622 are disordered. Polar residues predominate over residues Asn594–Gly606.

The protein belongs to the SAMHD1 family. As to quaternary structure, homodimer; in absence of GTP and dNTP. Homotetramer; in GTP- and dNTP-bound form. Interacts with rbbp8/CtIP. Zn(2+) is required as a cofactor.

It is found in the nucleus. The protein resides in the chromosome. The enzyme catalyses a 2'-deoxyribonucleoside 5'-triphosphate + H2O = a 2'-deoxyribonucleoside + triphosphate + H(+). It catalyses the reaction dATP + H2O = 2'-deoxyadenosine + triphosphate + H(+). The catalysed reaction is dCTP + H2O = 2'-deoxycytidine + triphosphate + H(+). It carries out the reaction dGTP + H2O = 2'-deoxyguanosine + triphosphate + H(+). The enzyme catalyses dTTP + H2O = thymidine + triphosphate + H(+). Allosterically activated and regulated via the combined actions of GTP and dNTPs (dATP, dGTP, dTTP and dCTP): Allosteric site 1 binds GTP, while allosteric site 2 binds dNTP. Allosteric activation promotes the formation of highly active homotetramers. Functionally, protein that acts both as a host restriction factor involved in defense response to virus and as a regulator of DNA end resection at stalled replication forks. Has deoxynucleoside triphosphate (dNTPase) activity, which is required to restrict infection by viruses: dNTPase activity reduces cellular dNTP levels to levels too low for retroviral reverse transcription to occur, blocking early-stage virus replication in dendritic and other myeloid cells. Functions during S phase at stalled DNA replication forks to promote the resection of gapped or reversed forks: acts by stimulating the exonuclease activity of MRE11, activating the ATR-CHK1 pathway and allowing the forks to restart replication. Its ability to promote degradation of nascent DNA at stalled replication forks is required to prevent induction of type I interferons, thereby preventing chronic inflammation. Ability to promote DNA end resection at stalled replication forks is independent of dNTPase activity. This chain is Deoxynucleoside triphosphate triphosphohydrolase SAMHD1, found in Danio rerio (Zebrafish).